A 429-amino-acid chain; its full sequence is Histidine--tRNA ligase (429 aa).

The protein belongs to the class-II aminoacyl-tRNA synthetase family. Homodimer.

It localises to the cytoplasm. It carries out the reaction tRNA(His) + L-histidine + ATP = L-histidyl-tRNA(His) + AMP + diphosphate + H(+). This Escherichia fergusonii (strain ATCC 35469 / DSM 13698 / CCUG 18766 / IAM 14443 / JCM 21226 / LMG 7866 / NBRC 102419 / NCTC 12128 / CDC 0568-73) protein is Histidine--tRNA ligase.